The chain runs to 215 residues: Hibernation-associated plasma protein HP-25 (215 aa).

The signal sequence occupies residues 1–28 (MPAQRGGALSMGAAGFWILVLSITSALA). The segment at 29–96 (DSNNQGNSEP…RPKSAFAVKL (68 aa)) is disordered. 2 stretches are compositionally biased toward pro residues: residues 39–51 (CGPP…PGIP) and 60–77 (LGPP…PQGP). One can recognise a Collagen-like domain in the interval 40 to 81 (GPPGPPGPPGIPGFPGAPGALGPPGPPGVPGIPGPQGPPGDV). In terms of domain architecture, C1q spans 85–215 (SSRPKSAFAV…VFFGYLLYGK (131 aa)). Residue Asn167 is glycosylated (N-linked (GlcNAc...) asparagine).

Plasma; synthesized in the liver.

It is found in the secreted. Plasma proteins HP-20, HP-25, HP-27 and HP-55 form a 140 kDa complex via disulfide bonds in the plasma and are hibernation specific. This Tamias sibiricus (Siberian chipmunk) protein is Hibernation-associated plasma protein HP-25.